Reading from the N-terminus, the 106-residue chain is ATP-dependent Clp protease adapter protein ClpS (106 aa).

This sequence belongs to the ClpS family. As to quaternary structure, binds to the N-terminal domain of the chaperone ClpA.

Its function is as follows. Involved in the modulation of the specificity of the ClpAP-mediated ATP-dependent protein degradation. In Vibrio atlanticus (strain LGP32) (Vibrio splendidus (strain Mel32)), this protein is ATP-dependent Clp protease adapter protein ClpS.